Consider the following 245-residue polypeptide: tRNA pseudouridine synthase A (245 aa).

The active-site Nucleophile is Asp52. Tyr111 is a binding site for substrate.

The protein belongs to the tRNA pseudouridine synthase TruA family. In terms of assembly, homodimer.

The enzyme catalyses uridine(38/39/40) in tRNA = pseudouridine(38/39/40) in tRNA. Its function is as follows. Formation of pseudouridine at positions 38, 39 and 40 in the anticodon stem and loop of transfer RNAs. The chain is tRNA pseudouridine synthase A from Rickettsia typhi (strain ATCC VR-144 / Wilmington).